The following is a 459-amino-acid chain: ATP synthase subunit beta (459 aa).

148–155 is a binding site for ATP; that stretch reads GGAGVGKT.

This sequence belongs to the ATPase alpha/beta chains family. F-type ATPases have 2 components, CF(1) - the catalytic core - and CF(0) - the membrane proton channel. CF(1) has five subunits: alpha(3), beta(3), gamma(1), delta(1), epsilon(1). CF(0) has three main subunits: a(1), b(2) and c(9-12). The alpha and beta chains form an alternating ring which encloses part of the gamma chain. CF(1) is attached to CF(0) by a central stalk formed by the gamma and epsilon chains, while a peripheral stalk is formed by the delta and b chains.

It localises to the cell inner membrane. It catalyses the reaction ATP + H2O + 4 H(+)(in) = ADP + phosphate + 5 H(+)(out). Produces ATP from ADP in the presence of a proton gradient across the membrane. The catalytic sites are hosted primarily by the beta subunits. In Thiobacillus denitrificans (strain ATCC 25259 / T1), this protein is ATP synthase subunit beta.